The sequence spans 236 residues: Probable sulfate/thiosulfate import ATP-binding protein CysA (236 aa).

The 231-residue stretch at 3–233 (ILIENISKRF…PTNTFVTNFL (231 aa)) folds into the ABC transporter domain. 35–42 (GPSGSGKS) serves as a coordination point for ATP.

This sequence belongs to the ABC transporter superfamily. Sulfate/tungstate importer (TC 3.A.1.6) family.

It localises to the plastid. The protein resides in the chloroplast. It catalyses the reaction sulfate(out) + ATP + H2O = sulfate(in) + ADP + phosphate + H(+). The enzyme catalyses thiosulfate(out) + ATP + H2O = thiosulfate(in) + ADP + phosphate + H(+). Functionally, part of the ABC transporter complex involved in sulfate/thiosulfate import. Responsible for energy coupling to the transport system. The protein is Probable sulfate/thiosulfate import ATP-binding protein CysA of Chlorella vulgaris (Green alga).